A 624-amino-acid polypeptide reads, in one-letter code: Actin-related protein 8 (624 aa).

Methionine 1 is subject to N-acetylmethionine. A compositionally biased stretch (basic and acidic residues) spans 1–25 (MTQAEKGDAENGKEKGGEKEKEQRG). The interval 1 to 29 (MTQAEKGDAENGKEKGGEKEKEQRGVKRP) is disordered. Residues serine 55 and threonine 56 each coordinate ATP. Phosphoserine is present on serine 132. 283–286 (DVGD) contacts ATP. The residue at position 412 (serine 412) is a Phosphoserine. Residues 430–462 (SKQEQSAKATADRKSASKPIGFEGDLRGQSSDL) are disordered.

The protein belongs to the actin family. ARP8 subfamily. As to quaternary structure, component of the chromatin remodeling INO80 complex; specifically part of a complex module associated with the DBINO domain of INO80. Exists as monomers and dimers, but the dimer is most probably the biologically relevant form required for stable interactions with histones that exploits the twofold symmetry of the nucleosome core.

It localises to the nucleus. Its subcellular location is the chromosome. Functionally, plays an important role in the functional organization of mitotic chromosomes. Exhibits low basal ATPase activity, and unable to polymerize. In terms of biological role, proposed core component of the chromatin remodeling INO80 complex which is involved in transcriptional regulation, DNA replication and probably DNA repair. Required for the recruitment of INO80 (and probably the INO80 complex) to sites of DNA damage Strongly prefer nucleosomes and H3-H4 tetramers over H2A-H2B dimers, suggesting it may act as a nucleosome recognition module within the complex. The polypeptide is Actin-related protein 8 (Actr8) (Mus musculus (Mouse)).